The following is a 492-amino-acid chain: Cyclic di-GMP phosphodiesterase VC_1295 (492 aa).

A run of 6 helical transmembrane segments spans residues 14-34 (IYHA…FALY), 49-69 (EIAT…HTLL), 80-100 (FIQL…LYYN), 111-131 (LKVL…LQLS), 160-180 (LIGL…MVAI), and 205-225 (EFAF…VLWS). An HAMP domain is found at 226–278 (RMMKEILDHQERSLQAVTQGNLQVRLPVYSNDELGNVAMLTNQMLDSLEATQN). The HD-GYP domain occupies 280-490 (VKTTRDVAIV…FVAIAAHFKD (211 aa)).

The protein localises to the cell inner membrane. The catalysed reaction is 3',3'-c-di-GMP + 2 H2O = 2 GMP + 2 H(+). Functionally, phosphodiesterase (PDE) that catalyzes the hydrolysis of cyclic diguanylate (c-di-GMP) to GMP in vitro. Increases motility and decreases biofilm formation in vivo. The polypeptide is Cyclic di-GMP phosphodiesterase VC_1295 (Vibrio cholerae serotype O1 (strain ATCC 39315 / El Tor Inaba N16961)).